The chain runs to 310 residues: TLC domain-containing protein 2 (310 aa).

A run of 6 helical transmembrane segments spans residues 6–26 (LLVA…LQLL), 40–60 (NIFV…VGLW), 79–99 (VLVA…LWNQ), 117–137 (CLST…SLLL), 167–187 (ASLA…SLWL), and 194–214 (LSLA…SISI). In terms of domain architecture, TLC spans 33–227 (RDRWMWRNIF…IRILTKDILQ (195 aa)).

This sequence belongs to the TLCD family.

The protein resides in the cell membrane. Functionally, regulates the composition and fluidity of the plasma membrane. Inhibits the incorporation of membrane-fluidizing phospholipids containing omega-3 long-chain polyunsaturated fatty acids (LCPUFA) and thereby promotes membrane rigidity. Does not appear to have any effect on LCPUFA synthesis. This is TLC domain-containing protein 2 (Tlcd2) from Mus musculus (Mouse).